Reading from the N-terminus, the 342-residue chain is [Citrate [pro-3S]-lyase] ligase (342 aa).

One can recognise an N-acetyltransferase domain in the interval 1–127; that stretch reads MTLILKRVQL…RAVLMENSRE (127 aa).

The enzyme catalyses holo-[citrate lyase ACP] + acetate + ATP = acetyl-[citrate lyase ACP] + AMP + diphosphate. Its function is as follows. Acetylation of prosthetic group (2-(5''-phosphoribosyl)-3'-dephosphocoenzyme-A) of the gamma subunit of citrate lyase. This Klebsiella pneumoniae protein is [Citrate [pro-3S]-lyase] ligase (citC).